Reading from the N-terminus, the 313-residue chain is Porphobilinogen deaminase (313 aa).

Cysteine 242 carries the S-(dipyrrolylmethanemethyl)cysteine modification.

This sequence belongs to the HMBS family. As to quaternary structure, monomer. Dipyrromethane is required as a cofactor.

The catalysed reaction is 4 porphobilinogen + H2O = hydroxymethylbilane + 4 NH4(+). Its pathway is porphyrin-containing compound metabolism; protoporphyrin-IX biosynthesis; coproporphyrinogen-III from 5-aminolevulinate: step 2/4. Its function is as follows. Tetrapolymerization of the monopyrrole PBG into the hydroxymethylbilane pre-uroporphyrinogen in several discrete steps. The sequence is that of Porphobilinogen deaminase from Pseudomonas putida (strain GB-1).